The following is a 78-amino-acid chain: Defensin-like protein 90 (78 aa).

The N-terminal stretch at 1 to 25 is a signal peptide; that stretch reads MTTKMFSYVLLHSLMMFAIILSSMG. 4 disulfides stabilise this stretch: Cys33-Cys70, Cys38-Cys59, Cys44-Cys68, and Cys48-Cys69.

This sequence belongs to the DEFL family.

It is found in the secreted. The polypeptide is Defensin-like protein 90 (Arabidopsis thaliana (Mouse-ear cress)).